A 175-amino-acid chain; its full sequence is Glutamyl-tRNA(Gln) amidotransferase subunit F, mitochondrial (175 aa).

A mitochondrion-targeting transit peptide spans 1–19; the sequence is MLKVSARHAPVLRLPRRFY.

The protein belongs to the GatF family. In terms of assembly, subunit of the heterotrimeric GatFAB amidotransferase (AdT) complex, composed of A, B and F subunits.

It is found in the mitochondrion inner membrane. It carries out the reaction L-glutamyl-tRNA(Gln) + L-glutamine + ATP + H2O = L-glutaminyl-tRNA(Gln) + L-glutamate + ADP + phosphate + H(+). In terms of biological role, allows the formation of correctly charged Gln-tRNA(Gln) through the transamidation of misacylated Glu-tRNA(Gln) in the mitochondria. The reaction takes place in the presence of glutamine and ATP through an activated gamma-phospho-Glu-tRNA(Gln). Required for proper protein synthesis within the mitochondrion. The chain is Glutamyl-tRNA(Gln) amidotransferase subunit F, mitochondrial from Lachancea thermotolerans (strain ATCC 56472 / CBS 6340 / NRRL Y-8284) (Yeast).